A 32-amino-acid chain; its full sequence is Ribulose bisphosphate carboxylase/oxygenase activase, chloroplastic (32 aa).

The segment at 13-32 (FGALREGPPTFEQPAMTIEK) is disordered.

The protein belongs to the RuBisCO activase family.

Its subcellular location is the plastid. It is found in the chloroplast stroma. Its function is as follows. Activation of RuBisCO (ribulose-1,5-bisphosphate carboxylase/oxygenase; EC 4.1.1.39) involves the ATP-dependent carboxylation of the epsilon-amino group of lysine leading to a carbamate structure. The sequence is that of Ribulose bisphosphate carboxylase/oxygenase activase, chloroplastic from Populus euphratica (Euphrates poplar).